A 146-amino-acid chain; its full sequence is Hemoglobin subunit beta (146 aa).

Position 1 is an N-acetylvaline (Val-1). In terms of domain architecture, Globin spans 2–146 (HLTAEEKNAI…VANALAHKYH (145 aa)). A Phosphothreonine modification is found at Thr-12. Lys-59 bears the N6-acetyllysine mark. Position 63 (His-63) interacts with heme b. Position 82 is an N6-acetyllysine (Lys-82). A heme b-binding site is contributed by His-92. Cys-93 bears the S-nitrosocysteine mark. Lys-144 carries the post-translational modification N6-acetyllysine.

It belongs to the globin family. As to quaternary structure, heterotetramer of two alpha chains and two beta chains. As to expression, red blood cells.

Involved in oxygen transport from the lung to the various peripheral tissues. This chain is Hemoglobin subunit beta (HBB), found in Osphranter rufus (Red kangaroo).